The following is a 452-amino-acid chain: Pup--protein ligase (452 aa).

Mg(2+) is bound at residue Glu9. An ATP-binding site is contributed by Arg53. Tyr55 contributes to the Mg(2+) binding site. Asp57 (proton acceptor) is an active-site residue. Glu63 is a binding site for Mg(2+). ATP is bound by residues Thr66 and Trp419.

It belongs to the Pup ligase/Pup deamidase family. Pup-conjugating enzyme subfamily.

It carries out the reaction ATP + [prokaryotic ubiquitin-like protein]-L-glutamate + [protein]-L-lysine = ADP + phosphate + N(6)-([prokaryotic ubiquitin-like protein]-gamma-L-glutamyl)-[protein]-L-lysine.. Its pathway is protein degradation; proteasomal Pup-dependent pathway. The protein operates within protein modification; protein pupylation. In terms of biological role, catalyzes the covalent attachment of the prokaryotic ubiquitin-like protein modifier Pup to the proteasomal substrate proteins, thereby targeting them for proteasomal degradation. This tagging system is termed pupylation. The ligation reaction involves the side-chain carboxylate of the C-terminal glutamate of Pup and the side-chain amino group of a substrate lysine. The sequence is that of Pup--protein ligase from Nocardia farcinica (strain IFM 10152).